The sequence spans 118 residues: Small ribosomal subunit protein uS13 (118 aa).

The interval 94–118 (GLPVRGQRTKTNARTRKGPRKPIKK) is disordered.

Belongs to the universal ribosomal protein uS13 family. Part of the 30S ribosomal subunit. Forms a loose heterodimer with protein S19. Forms two bridges to the 50S subunit in the 70S ribosome.

Functionally, located at the top of the head of the 30S subunit, it contacts several helices of the 16S rRNA. In the 70S ribosome it contacts the 23S rRNA (bridge B1a) and protein L5 of the 50S subunit (bridge B1b), connecting the 2 subunits; these bridges are implicated in subunit movement. Contacts the tRNAs in the A and P-sites. The polypeptide is Small ribosomal subunit protein uS13 (Tolumonas auensis (strain DSM 9187 / NBRC 110442 / TA 4)).